A 479-amino-acid polypeptide reads, in one-letter code: MSDRILSLFKPFEAFLPEVISPERKVPYNQKLIWTGVSLLIFLVLGQIPLYGIVSAETSDPLYWLRAMLASNRGTLMELGVSPIITSSMIFQFLQGTQLLQVSLDSKEDRELYQIAQKVCAIILTFGQALVVVMTGNYGSPSDLGIAISLLLIFQLMFASFIVLLLDELLTKGYGLGSGISLFTATNIAENIFWKAFAPTTVNSGRGKEFEGAVIAFFHLLAVRKDKKRALVEAFYRENLPNMFQVIATVFVFLFVLYLQGFRYELPVKSTKVRGQMAIYPIKLFYTSNTPIMLQSALSSNIFLISQILFQKYPSNPVIRLFGVWGIRPGTNGPQVPLSGISYYLQPIGSLKMALLDPIKTVIYTAFVLGTCALFSKTWIEISGTSAKDVAKQFKEQGMVINGKRETSVYKELKKIIPTAAAFGGATIGALSVGSDLLGALGSGASILLATTTIYGYYEVAAKEGGFTKNLVNGFSEMM.

At 1–32 (MSDRILSLFKPFEAFLPEVISPERKVPYNQKL) the chain is on the cytoplasmic side. Residues 33–53 (IWTGVSLLIFLVLGQIPLYGI) form a helical membrane-spanning segment. At 54 to 75 (VSAETSDPLYWLRAMLASNRGT) the chain is on the lumenal side. Residues 76-96 (LMELGVSPIITSSMIFQFLQG) form a helical membrane-spanning segment. Over 97 to 118 (TQLLQVSLDSKEDRELYQIAQK) the chain is Cytoplasmic. A helical transmembrane segment spans residues 119 to 139 (VCAIILTFGQALVVVMTGNYG). Residues 140–145 (SPSDLG) are Lumenal-facing. The chain crosses the membrane as a helical span at residues 146–166 (IAISLLLIFQLMFASFIVLLL). Residues 167–245 (DELLTKGYGL…YRENLPNMFQ (79 aa)) are Cytoplasmic-facing. Residues 246-266 (VIATVFVFLFVLYLQGFRYEL) traverse the membrane as a helical segment. Over 267-361 (PVKSTKVRGQ…KMALLDPIKT (95 aa)) the chain is Lumenal. A helical transmembrane segment spans residues 362-382 (VIYTAFVLGTCALFSKTWIEI). Residues 383–415 (SGTSAKDVAKQFKEQGMVINGKRETSVYKELKK) are Cytoplasmic-facing. A helical membrane pass occupies residues 416–434 (IIPTAAAFGGATIGALSVG). Residues 435–440 (SDLLGA) lie on the Lumenal side of the membrane. Residues 441-458 (LGSGASILLATTTIYGYY) form a helical membrane-spanning segment. The Cytoplasmic segment spans residues 459–479 (EVAAKEGGFTKNLVNGFSEMM).

Belongs to the SecY/SEC61-alpha family. In terms of assembly, heterotrimeric complex composed of SEC61-alpha, SEC61-beta and SEC61-gamma.

The protein resides in the endoplasmic reticulum membrane. In terms of biological role, appears to play a crucial role in the insertion of secretory and membrane polypeptides into the ER. It is required for assembly of membrane and secretory proteins and is essential for cell growth. It interacts with other membrane proteins required for protein translocation. Upon binding to SEC62/63 complex, secretory precursor polypeptides may engage SEC61 to begin membrane penetration event. A cycle of assembly and disassembly of SEC62/63 from SEC61 may govern the activity of the translocase. The chain is Protein transport protein SEC61 subunit alpha (SEC61) from Candida glabrata (strain ATCC 2001 / BCRC 20586 / JCM 3761 / NBRC 0622 / NRRL Y-65 / CBS 138) (Yeast).